Consider the following 468-residue polypeptide: Siroheme synthase (468 aa).

A precorrin-2 dehydrogenase /sirohydrochlorin ferrochelatase region spans residues 1-203 (MQYLPIFLNI…GQEEEAEGAL (203 aa)). NAD(+)-binding positions include 22–23 (TV) and 43–44 (PK). S128 bears the Phosphoserine mark. The uroporphyrinogen-III C-methyltransferase stretch occupies residues 216–468 (GEVYLVGAGP…VPDREPLDAR (253 aa)). P225 contributes to the S-adenosyl-L-methionine binding site. Catalysis depends on D248, which acts as the Proton acceptor. Residue K270 is the Proton donor of the active site. Residues 301 to 303 (GGD), I306, 331 to 332 (TA), M383, and G412 contribute to the S-adenosyl-L-methionine site.

In the N-terminal section; belongs to the precorrin-2 dehydrogenase / sirohydrochlorin ferrochelatase family. This sequence in the C-terminal section; belongs to the precorrin methyltransferase family.

The catalysed reaction is uroporphyrinogen III + 2 S-adenosyl-L-methionine = precorrin-2 + 2 S-adenosyl-L-homocysteine + H(+). It carries out the reaction precorrin-2 + NAD(+) = sirohydrochlorin + NADH + 2 H(+). The enzyme catalyses siroheme + 2 H(+) = sirohydrochlorin + Fe(2+). Its pathway is cofactor biosynthesis; adenosylcobalamin biosynthesis; precorrin-2 from uroporphyrinogen III: step 1/1. It participates in cofactor biosynthesis; adenosylcobalamin biosynthesis; sirohydrochlorin from precorrin-2: step 1/1. It functions in the pathway porphyrin-containing compound metabolism; siroheme biosynthesis; precorrin-2 from uroporphyrinogen III: step 1/1. The protein operates within porphyrin-containing compound metabolism; siroheme biosynthesis; siroheme from sirohydrochlorin: step 1/1. Its pathway is porphyrin-containing compound metabolism; siroheme biosynthesis; sirohydrochlorin from precorrin-2: step 1/1. Multifunctional enzyme that catalyzes the SAM-dependent methylations of uroporphyrinogen III at position C-2 and C-7 to form precorrin-2 via precorrin-1. Then it catalyzes the NAD-dependent ring dehydrogenation of precorrin-2 to yield sirohydrochlorin. Finally, it catalyzes the ferrochelation of sirohydrochlorin to yield siroheme. The polypeptide is Siroheme synthase (Nitrosococcus oceani (strain ATCC 19707 / BCRC 17464 / JCM 30415 / NCIMB 11848 / C-107)).